We begin with the raw amino-acid sequence, 320 residues long: Lipoyl synthase (320 aa).

[4Fe-4S] cluster contacts are provided by Cys-67, Cys-72, Cys-78, Cys-93, Cys-97, Cys-100, and Ser-307. In terms of domain architecture, Radical SAM core spans 79 to 296; it reads FNHGTATFMI…REKAAEMGFE (218 aa).

It belongs to the radical SAM superfamily. Lipoyl synthase family. [4Fe-4S] cluster is required as a cofactor.

It is found in the cytoplasm. The enzyme catalyses [[Fe-S] cluster scaffold protein carrying a second [4Fe-4S](2+) cluster] + N(6)-octanoyl-L-lysyl-[protein] + 2 oxidized [2Fe-2S]-[ferredoxin] + 2 S-adenosyl-L-methionine + 4 H(+) = [[Fe-S] cluster scaffold protein] + N(6)-[(R)-dihydrolipoyl]-L-lysyl-[protein] + 4 Fe(3+) + 2 hydrogen sulfide + 2 5'-deoxyadenosine + 2 L-methionine + 2 reduced [2Fe-2S]-[ferredoxin]. The protein operates within protein modification; protein lipoylation via endogenous pathway; protein N(6)-(lipoyl)lysine from octanoyl-[acyl-carrier-protein]: step 2/2. Catalyzes the radical-mediated insertion of two sulfur atoms into the C-6 and C-8 positions of the octanoyl moiety bound to the lipoyl domains of lipoate-dependent enzymes, thereby converting the octanoylated domains into lipoylated derivatives. The chain is Lipoyl synthase from Actinobacillus succinogenes (strain ATCC 55618 / DSM 22257 / CCUG 43843 / 130Z).